We begin with the raw amino-acid sequence, 414 residues long: CinA-like protein (414 aa).

The protein belongs to the CinA family.

The chain is CinA-like protein from Citrifermentans bemidjiense (strain ATCC BAA-1014 / DSM 16622 / JCM 12645 / Bem) (Geobacter bemidjiensis).